The chain runs to 348 residues: Phenylalanine--tRNA ligase alpha subunit (348 aa).

Position 262 (glutamate 262) interacts with Mg(2+).

Belongs to the class-II aminoacyl-tRNA synthetase family. Phe-tRNA synthetase alpha subunit type 1 subfamily. As to quaternary structure, tetramer of two alpha and two beta subunits. It depends on Mg(2+) as a cofactor.

It is found in the cytoplasm. The enzyme catalyses tRNA(Phe) + L-phenylalanine + ATP = L-phenylalanyl-tRNA(Phe) + AMP + diphosphate + H(+). This Streptococcus pneumoniae (strain JJA) protein is Phenylalanine--tRNA ligase alpha subunit.